The following is a 635-amino-acid chain: Very-long-chain aldehyde decarbonylase GL1-6 (635 aa).

Helical transmembrane passes span 46 to 66 (LLNF…QLWI), 100 to 120 (IILT…AQVA), 127 to 147 (GMVV…YWLH), and 183 to 203 (VVYF…GTVS). A Fatty acid hydroxylase domain is found at 139 to 273 (VEFLYYWLHR…MPVYDYIYGT (135 aa)).

The protein belongs to the sterol desaturase family. In terms of assembly, homodimer. As to expression, expressed in germinating seeds and shoots.

It localises to the endoplasmic reticulum membrane. It carries out the reaction a long-chain fatty aldehyde + 2 NADPH + O2 + H(+) = a long-chain alkane + formate + 2 NADP(+) + H2O. Aldehyde decarbonylase involved in the conversion of aldehydes to alkanes. Core component of a very-long-chain alkane synthesis complex. In Oryza sativa subsp. japonica (Rice), this protein is Very-long-chain aldehyde decarbonylase GL1-6.